A 36-amino-acid polypeptide reads, in one-letter code: MQTKQYFILRSLVKKYGKDNVINTVNKIAKDIEIKK.

This is an uncharacterized protein from Spiroplasma melliferum (SpV1).